We begin with the raw amino-acid sequence, 193 residues long: Holliday junction branch migration complex subunit RuvA (193 aa).

Residues 1 to 64 (MIGRIAGTLI…EDAHLLYGFG (64 aa)) are domain I. Positions 65–143 (TAAERETFRQ…ADLGTVPGGP (79 aa)) are domain II. The interval 144–151 (AVSDDAVD) is flexible linker. The segment at 151-193 (DVLNALLALGYSDKEAAQAIKQVPAGTGVSEGIKLALKALSKG) is domain III.

Belongs to the RuvA family. In terms of assembly, homotetramer. Forms an RuvA(8)-RuvB(12)-Holliday junction (HJ) complex. HJ DNA is sandwiched between 2 RuvA tetramers; dsDNA enters through RuvA and exits via RuvB. An RuvB hexamer assembles on each DNA strand where it exits the tetramer. Each RuvB hexamer is contacted by two RuvA subunits (via domain III) on 2 adjacent RuvB subunits; this complex drives branch migration. In the full resolvosome a probable DNA-RuvA(4)-RuvB(12)-RuvC(2) complex forms which resolves the HJ.

It is found in the cytoplasm. Its function is as follows. The RuvA-RuvB-RuvC complex processes Holliday junction (HJ) DNA during genetic recombination and DNA repair, while the RuvA-RuvB complex plays an important role in the rescue of blocked DNA replication forks via replication fork reversal (RFR). RuvA specifically binds to HJ cruciform DNA, conferring on it an open structure. The RuvB hexamer acts as an ATP-dependent pump, pulling dsDNA into and through the RuvAB complex. HJ branch migration allows RuvC to scan DNA until it finds its consensus sequence, where it cleaves and resolves the cruciform DNA. This is Holliday junction branch migration complex subunit RuvA from Ralstonia nicotianae (strain ATCC BAA-1114 / GMI1000) (Ralstonia solanacearum).